The primary structure comprises 347 residues: Ribosomal RNA small subunit methyltransferase C (347 aa).

The protein belongs to the methyltransferase superfamily. RsmC family. As to quaternary structure, monomer.

The protein localises to the cytoplasm. It catalyses the reaction guanosine(1207) in 16S rRNA + S-adenosyl-L-methionine = N(2)-methylguanosine(1207) in 16S rRNA + S-adenosyl-L-homocysteine + H(+). Its function is as follows. Specifically methylates the guanine in position 1207 of 16S rRNA in the 30S particle. In Serratia proteamaculans (strain 568), this protein is Ribosomal RNA small subunit methyltransferase C.